The primary structure comprises 401 residues: Putative hetero-Diels-Alderase asR5 (401 aa).

A signal peptide spans 1-21 (MRRSFLISAALGLSMSTPALA). Asparagine 71, asparagine 77, asparagine 240, and asparagine 334 each carry an N-linked (GlcNAc...) asparagine glycan.

This sequence belongs to the eupF Diels-Alderase family.

Its pathway is secondary metabolite biosynthesis; terpenoid biosynthesis. Functionally, putative hetero-Diels-Alderase; part of the gene cluster that mediates the biosynthesis of xenovulene A, an unusual meroterpenoid that has potent inhibitory effects on the human gamma-aminobutyrate A (GABAA) benzodiazepine receptor. The first step of xenovulene A biosynthesis is the biosynthesis of 3-methylorcinaldehyde performed by the non-reducing polyketide synthase aspks1. The salicylate hydroxylase asL1 then catalyzes the oxidative dearomatization of 3-methylorcinaldehyde to yield a dearomatized hydroxycyclohexadione. The 2-oxoglutarate-dependent dioxygenase asL3 further catalyzes the oxidative ring expansion to provide the first tropolone metabolite. The cytochrome P450 monooxygenase asR2 allows the synthesis of tropolone hemiacetal. In parallel, a previously unrecognised class of terpene cyclase, asR6, produces alpha-humulene from farnesylpyrophosphate (FPP). The putative Diels-Alderase asR5 probably catalyzes the formation of the tropolone-humulene skeleton by linking humulene and the polyketide moiety. Oxidative-ring contractions catalyzed by asL4 and asL6 then processively remove carbon atoms from the polyketide to yield xenovulene A. In Sarocladium schorii (Acremonium strictum (strain IMI 501407)), this protein is Putative hetero-Diels-Alderase asR5.